Here is a 170-residue protein sequence, read N- to C-terminus: RNA pyrophosphohydrolase (170 aa).

The 154-residue stretch at 9–162 (PYRPCAGIMV…KRAVYEKVVA (154 aa)) folds into the Nudix hydrolase domain. The short motif at 50 to 71 (GGIDDGERPLTAAIRELYEETG) is the Nudix box element.

The protein belongs to the Nudix hydrolase family. RppH subfamily. A divalent metal cation serves as cofactor.

Accelerates the degradation of transcripts by removing pyrophosphate from the 5'-end of triphosphorylated RNA, leading to a more labile monophosphorylated state that can stimulate subsequent ribonuclease cleavage. This Agrobacterium fabrum (strain C58 / ATCC 33970) (Agrobacterium tumefaciens (strain C58)) protein is RNA pyrophosphohydrolase.